The following is a 115-amino-acid chain: Probable 4-amino-4-deoxy-L-arabinose-phosphoundecaprenol flippase subunit ArnE (115 aa).

Transmembrane regions (helical) follow at residues 42–62 (PWPWLALLALGLGLLCWLLLL), 65–85 (VEVGSAYPMLALNFVLVTLAA), and 93–112 (VDRRHLAGLLLIVAGVVLLG). In terms of domain architecture, EamA spans 46–113 (LALLALGLGL…IVAGVVLLGR (68 aa)).

Belongs to the ArnE family. In terms of assembly, heterodimer of ArnE and ArnF.

The protein resides in the cell inner membrane. It participates in bacterial outer membrane biogenesis; lipopolysaccharide biosynthesis. Its function is as follows. Translocates 4-amino-4-deoxy-L-arabinose-phosphoundecaprenol (alpha-L-Ara4N-phosphoundecaprenol) from the cytoplasmic to the periplasmic side of the inner membrane. The sequence is that of Probable 4-amino-4-deoxy-L-arabinose-phosphoundecaprenol flippase subunit ArnE from Pseudomonas aeruginosa (strain UCBPP-PA14).